The primary structure comprises 390 residues: Queuine tRNA-ribosyltransferase (390 aa).

Asp-92 acts as the Proton acceptor in catalysis. Substrate-binding positions include 92–96 (DSGGF), Asp-146, Gln-195, and Gly-222. The interval 253–259 (GVGTPED) is RNA binding. The Nucleophile role is filled by Asp-272. The interval 277 to 281 (TRNAR) is RNA binding; important for wobble base 34 recognition. Cys-310, Cys-312, Cys-315, and His-354 together coordinate Zn(2+).

Belongs to the queuine tRNA-ribosyltransferase family. In terms of assembly, homodimer. Within each dimer, one monomer is responsible for RNA recognition and catalysis, while the other monomer binds to the replacement base PreQ1. Requires Zn(2+) as cofactor.

It carries out the reaction 7-aminomethyl-7-carbaguanine + guanosine(34) in tRNA = 7-aminomethyl-7-carbaguanosine(34) in tRNA + guanine. Its pathway is tRNA modification; tRNA-queuosine biosynthesis. Functionally, catalyzes the base-exchange of a guanine (G) residue with the queuine precursor 7-aminomethyl-7-deazaguanine (PreQ1) at position 34 (anticodon wobble position) in tRNAs with GU(N) anticodons (tRNA-Asp, -Asn, -His and -Tyr). Catalysis occurs through a double-displacement mechanism. The nucleophile active site attacks the C1' of nucleotide 34 to detach the guanine base from the RNA, forming a covalent enzyme-RNA intermediate. The proton acceptor active site deprotonates the incoming PreQ1, allowing a nucleophilic attack on the C1' of the ribose to form the product. After dissociation, two additional enzymatic reactions on the tRNA convert PreQ1 to queuine (Q), resulting in the hypermodified nucleoside queuosine (7-(((4,5-cis-dihydroxy-2-cyclopenten-1-yl)amino)methyl)-7-deazaguanosine). This chain is Queuine tRNA-ribosyltransferase, found in Delftia acidovorans (strain DSM 14801 / SPH-1).